Here is an 83-residue protein sequence, read N- to C-terminus: Small ribosomal subunit protein bS16 (83 aa).

Belongs to the bacterial ribosomal protein bS16 family.

This is Small ribosomal subunit protein bS16 from Azotobacter vinelandii (strain DJ / ATCC BAA-1303).